The sequence spans 39 residues: Phosphatase RapI inhibitor (39 aa).

The propeptide occupies 1-34; it reads MKISRILLAAVILSSVFSITYLQSDHNTEIKVAA.

Belongs to the Phr family. Contains a predicted signal peptide cleavage site in the N-terminal region, however the propeptide is probably subject to only one processing event, at the N-terminal end of the mature peptide.

The protein resides in the secreted. It is found in the cytoplasm. Its function is as follows. Intercellular signaling molecule that inhibits excision of the mobile genetic element ICEBs1 when cells are crowded by cells that contain ICEBs1 and produce the PhrI peptide. Secreted during production, but the mature peptide acts intracellularly, indicating that it needs to be imported into the cell to function. Acts by inhibiting RapI activity. This chain is Phosphatase RapI inhibitor (phrI), found in Bacillus subtilis (strain 168).